The sequence spans 201 residues: Peptide deformylase (201 aa).

Fe cation is bound by residues cysteine 114 and histidine 156. The active site involves glutamate 157. A Fe cation-binding site is contributed by histidine 160.

It belongs to the polypeptide deformylase family. Fe(2+) serves as cofactor.

The catalysed reaction is N-terminal N-formyl-L-methionyl-[peptide] + H2O = N-terminal L-methionyl-[peptide] + formate. Functionally, removes the formyl group from the N-terminal Met of newly synthesized proteins. Requires at least a dipeptide for an efficient rate of reaction. N-terminal L-methionine is a prerequisite for activity but the enzyme has broad specificity at other positions. This chain is Peptide deformylase, found in Tropheryma whipplei (strain TW08/27) (Whipple's bacillus).